A 121-amino-acid chain; its full sequence is Large ribosomal subunit protein uL18 (121 aa).

Residues 1–22 (MIKKPDKKTLRQGKHKRVRRKV) are compositionally biased toward basic residues. A disordered region spans residues 1-23 (MIKKPDKKTLRQGKHKRVRRKVA).

The protein belongs to the universal ribosomal protein uL18 family. As to quaternary structure, part of the 50S ribosomal subunit; part of the 5S rRNA/L5/L18/L25 subcomplex. Contacts the 5S and 23S rRNAs.

Functionally, this is one of the proteins that bind and probably mediate the attachment of the 5S RNA into the large ribosomal subunit, where it forms part of the central protuberance. The protein is Large ribosomal subunit protein uL18 of Syntrophomonas wolfei subsp. wolfei (strain DSM 2245B / Goettingen).